Here is a 334-residue protein sequence, read N- to C-terminus: N-chimaerin (334 aa).

Residues 1–10 (MPSKESWSGR) are compositionally biased toward polar residues. The tract at residues 1–22 (MPSKESWSGRKTNRATVHKSKQ) is disordered. A Phosphothreonine modification is found at Thr-67. Residues 80 to 130 (VHNFKVHTFRGPHWCEYCANFMWGLIAQGVKCADCGLNVHKQCSKMVPNDC) form a Phorbol-ester/DAG-type zinc finger. Positions 143–334 (CDLTTLVKAR…LLIKNEDILF (192 aa)) constitute a Rho-GAP domain. A Phosphothreonine modification is found at Thr-215.

Interacts with EPHA4; effector of EPHA4 in axon guidance linking EPHA4 activation to RAC1 regulation. Post-translationally, phosphorylated. Phosphorylation is EPHA4 kinase activity-dependent.

Its function is as follows. GTPase-activating protein for p21-rac and a phorbol ester receptor. Involved in the assembly of neuronal locomotor circuits as a direct effector of EPHA4 in axon guidance. The sequence is that of N-chimaerin (CHN1) from Bos taurus (Bovine).